Here is a 351-residue protein sequence, read N- to C-terminus: Tsukushi-A (351 aa).

Positions 1–17 are cleaved as a signal peptide; it reads MALSSWIFFLLVHGIVG. 9 LRR repeats span residues 59-82, 85-108, 109-132, 134-155, 158-181, 182-203, 204-226, 252-276, and 277-300; these read PLDT…VLSG, YTTL…TFSK, LRYL…SFLY, RLTE…AFTL, QGRS…AERP, VPNI…DLHG, IPLR…SFLG, LTSL…MFFG, and LKAL…IMLH.

In terms of assembly, interacts with bmp4. Interacts with dll1 (via extracellular region). Interacts with fgf8; inhibits fgf8 signaling. Interacts with nodal2/Xnr2; enhances nodal2 activity. In terms of tissue distribution, during embryogenesis, localized to the animal hemisphere during late blastula and gastrula stages. At stage 10, expression is also detected around the dorsal blastopore lip. Expressed in the mandibular crest segment, branchial crest segment and differentiating somites at stage 21/22. Expressed in the germ ring including the shield at shield stage and in the tailbud at the 10-somite stage. At the early neurula stage (stage 13), expression is hardly detectable in the presumptive neural plate region, and restricted to the non-neural ectoderm where its levels increase by stage 14, especially in the presumptive anterior neural fold. Also expressed in the prospective cranial neural crest. At the early tailbud stage (stage 23), expressed in cranial neural crest cells, the dorsal retina and the lens placode.

It localises to the secreted. Functionally, contributes to various developmental events through its interactions with multiple signaling pathways. Dorsalizing factor which functions as an inhibitor of bone morphogenetic proteins (BMP) during gastrulation. Promotes dll1-dependent activation of Notch signaling and is required for neural crest formation. Induces endoderm and dorsal mesoderm formation by enhancing nodal2/Xnr2 activity while inhibiting ventrolateral mesoderm formation through inhibition of fgf8. In Xenopus laevis (African clawed frog), this protein is Tsukushi-A.